A 424-amino-acid polypeptide reads, in one-letter code: Ubiquitin carboxyl-terminal hydrolase 12/46 homolog (424 aa).

Residues 24–421 (FGLVNFGNTC…TGYILFYQSR (398 aa)) enclose the USP domain. Cys-33 (nucleophile) is an active-site residue. The disordered stretch occupies residues 131 to 189 (NAGPSNGNPKATNQGGSTSAMASSIASKSSSTSNSNSNSNSTTNSNGNSSNSTGSLNAN). Residues 133–144 (GPSNGNPKATNQ) show a composition bias toward polar residues. The span at 145–189 (GGSTSAMASSIASKSSSTSNSNSNSNSTTNSNGNSSNSTGSLNAN) shows a compositional bias: low complexity. Residue His-369 is the Proton acceptor of the active site.

It belongs to the peptidase C19 family. Catalytic component of the Usp12-46 deubiquitylase complex consisting of Usp12-46, Wdr20 and Uaf1. The Usp12-46 deubiquitylase complex associates with arr/arrow; the interaction leads to deubiquitination and stabilization of arr/arrow.

It catalyses the reaction Thiol-dependent hydrolysis of ester, thioester, amide, peptide and isopeptide bonds formed by the C-terminal Gly of ubiquitin (a 76-residue protein attached to proteins as an intracellular targeting signal).. In terms of biological role, catalytic component of the Usp12-46 deubiquitylase complex. Deubiquitylates the wg/wingless-signaling receptor arr/arrow, which stabilizes the receptor and increases its concentration at the cell surface; this enhances the sensitivity of cells to wg/wingless-signal stimulation. This increases the amplitude and spatial range of the signaling response to the wg/wingless morphogen gradient, facilitating the precise, concentration-dependent regulation of its target genes. Required for wg/wingless-mediated signaling in the wing imaginal disc and for wg/wingless-dependent regulation of adult intestinal stem cell proliferation. Negative regulator of Notch signaling, possibly by regulating lysosomal degradation of N/Notch and affecting cell surface receptor levels; this may be context and cell-type specific function involved in external sensory organ development but not in wing imaginal-disc dorsoventral boundary signaling. Protects against HTT/huntingtin-induced polyglutamine expansion-dependent neurodegeneration. The sequence is that of Ubiquitin carboxyl-terminal hydrolase 12/46 homolog from Drosophila melanogaster (Fruit fly).